Here is a 357-residue protein sequence, read N- to C-terminus: Phosphoserine aminotransferase (357 aa).

Arginine 41 lines the L-glutamate pocket. Pyridoxal 5'-phosphate is bound by residues 75 to 76 (GT), tryptophan 100, threonine 150, aspartate 170, and glutamine 193. Lysine 194 is subject to N6-(pyridoxal phosphate)lysine. 234-235 (NT) is a pyridoxal 5'-phosphate binding site.

The protein belongs to the class-V pyridoxal-phosphate-dependent aminotransferase family. SerC subfamily. In terms of assembly, homodimer. Pyridoxal 5'-phosphate is required as a cofactor.

Its subcellular location is the cytoplasm. It catalyses the reaction O-phospho-L-serine + 2-oxoglutarate = 3-phosphooxypyruvate + L-glutamate. The enzyme catalyses 4-(phosphooxy)-L-threonine + 2-oxoglutarate = (R)-3-hydroxy-2-oxo-4-phosphooxybutanoate + L-glutamate. The protein operates within amino-acid biosynthesis; L-serine biosynthesis; L-serine from 3-phospho-D-glycerate: step 2/3. Functionally, catalyzes the reversible conversion of 3-phosphohydroxypyruvate to phosphoserine and of 3-hydroxy-2-oxo-4-phosphonooxybutanoate to phosphohydroxythreonine. This is Phosphoserine aminotransferase from Lactiplantibacillus plantarum (strain ATCC BAA-793 / NCIMB 8826 / WCFS1) (Lactobacillus plantarum).